Reading from the N-terminus, the 225-residue chain is Germin-like protein 3-1 (225 aa).

Residues 1–22 (MRAAVAHRILLSLALFAVLCRC) form the signal peptide. C31 and C51 are joined by a disulfide. The Cupin type-1 domain maps to 65–216 (SALSRATNPA…AFKITGQDVQ (152 aa)). An N-linked (GlcNAc...) asparagine glycan is attached at N81. Mn(2+) is bound by residues H115, H117, E122, and H161.

This sequence belongs to the germin family. As to quaternary structure, oligomer (believed to be a pentamer but probably hexamer).

Its subcellular location is the secreted. The protein resides in the extracellular space. The protein localises to the apoplast. Functionally, may play a role in plant defense. Probably has no oxalate oxidase activity even if the active site is conserved. This Oryza sativa subsp. japonica (Rice) protein is Germin-like protein 3-1.